Consider the following 99-residue polypeptide: Teretoxin Tsu6.4 (99 aa).

An N-terminal signal peptide occupies residues 1-21 (MRLLLILVLLTPVIVAFSVDE). A propeptide spanning residues 22–53 (ELNNADGANAASFTADQEVRHKRNLFPAIARR) is cleaved from the precursor.

Contains 3 disulfide bonds. Expressed by the venom duct.

It is found in the secreted. The protein is Teretoxin Tsu6.4 of Terebra subulata (Chocolate spotted auger).